The chain runs to 663 residues: Bicarbonate transport ATP-binding protein CmpC (663 aa).

Residues 5–239 form the ABC transporter domain; the sequence is VAVENIEKSF…RPRKRMDVVH (235 aa). Position 42-49 (42-49) interacts with ATP; the sequence is GHSGCGKS. A cmpA-like region spans residues 281–663; sequence LEIGYVPLMA…LDQPRPIAAA (383 aa).

It belongs to the ABC transporter superfamily. Nitrate/nitrite/cyanate uptake transporter (NitT) (TC 3.A.1.16) family. The complex is composed of two ATP-binding proteins (CmpC and CmpD), a transmembrane protein (CmpB) and a solute-binding protein (CmpA).

The protein localises to the cell inner membrane. Functionally, part of the ABC transporter complex CmpABCD involved in bicarbonate transport. Responsible for energy coupling to the transport system. The chain is Bicarbonate transport ATP-binding protein CmpC (cmpC) from Synechococcus elongatus (strain ATCC 33912 / PCC 7942 / FACHB-805) (Anacystis nidulans R2).